Reading from the N-terminus, the 155-residue chain is 6,7-dimethyl-8-ribityllumazine synthase (155 aa).

Residues Phe-24, 58 to 60, and 82 to 84 contribute to the 5-amino-6-(D-ribitylamino)uracil site; these read AFE and AII. 87–88 provides a ligand contact to (2S)-2-hydroxy-3-oxobutyl phosphate; that stretch reads AT. His-90 acts as the Proton donor in catalysis. Phe-115 contributes to the 5-amino-6-(D-ribitylamino)uracil binding site. Arg-129 is a (2S)-2-hydroxy-3-oxobutyl phosphate binding site.

Belongs to the DMRL synthase family.

The enzyme catalyses (2S)-2-hydroxy-3-oxobutyl phosphate + 5-amino-6-(D-ribitylamino)uracil = 6,7-dimethyl-8-(1-D-ribityl)lumazine + phosphate + 2 H2O + H(+). It participates in cofactor biosynthesis; riboflavin biosynthesis; riboflavin from 2-hydroxy-3-oxobutyl phosphate and 5-amino-6-(D-ribitylamino)uracil: step 1/2. Catalyzes the formation of 6,7-dimethyl-8-ribityllumazine by condensation of 5-amino-6-(D-ribitylamino)uracil with 3,4-dihydroxy-2-butanone 4-phosphate. This is the penultimate step in the biosynthesis of riboflavin. This is 6,7-dimethyl-8-ribityllumazine synthase from Prosthecochloris aestuarii (strain DSM 271 / SK 413).